A 122-amino-acid polypeptide reads, in one-letter code: Histone H2B.2 (122 aa).

Over residues 1-10 the composition is skewed to low complexity; the sequence is MAPKKAPAAT. Positions 1 to 28 are disordered; the sequence is MAPKKAPAATTEKKVKKAPTTEKKNKKK. Residue Ala-2 is modified to N,N,N-trimethylalanine. N6-acetyllysine is present on residues Lys-5 and Lys-42. Residue Lys-116 forms a Glycyl lysine isopeptide (Lys-Gly) (interchain with G-Cter in ubiquitin) linkage.

Belongs to the histone H2B family. As to quaternary structure, the nucleosome is a histone octamer containing two molecules each of H2A, H2B, H3 and H4 assembled in one H3-H4 heterotetramer and two H2A-H2B heterodimers. The octamer wraps approximately 147 bp of DNA. In terms of processing, acetylation occurs almost exclusively in the MAC. Post-translationally, monoubiquitination to form H2BK115ub1 gives a specific tag for epigenetic transcriptional activation and is also prerequisite for H3K4me and H3K79me formation.

Its subcellular location is the nucleus. The protein localises to the chromosome. Its function is as follows. Core component of nucleosome. Nucleosomes wrap and compact DNA into chromatin, limiting DNA accessibility to the cellular machineries which require DNA as a template. Histones thereby play a central role in transcription regulation, DNA repair, DNA replication and chromosomal stability. DNA accessibility is regulated via a complex set of post-translational modifications of histones, also called histone code, and nucleosome remodeling. In Tetrahymena thermophila (strain SB210), this protein is Histone H2B.2 (HTB2).